A 243-amino-acid chain; its full sequence is 3-deoxy-manno-octulosonate cytidylyltransferase (243 aa).

This sequence belongs to the KdsB family.

It localises to the cytoplasm. It catalyses the reaction 3-deoxy-alpha-D-manno-oct-2-ulosonate + CTP = CMP-3-deoxy-beta-D-manno-octulosonate + diphosphate. It functions in the pathway nucleotide-sugar biosynthesis; CMP-3-deoxy-D-manno-octulosonate biosynthesis; CMP-3-deoxy-D-manno-octulosonate from 3-deoxy-D-manno-octulosonate and CTP: step 1/1. Its function is as follows. Activates KDO (a required 8-carbon sugar) for incorporation into bacterial lipopolysaccharide in Gram-negative bacteria. This is 3-deoxy-manno-octulosonate cytidylyltransferase from Wigglesworthia glossinidia brevipalpis.